We begin with the raw amino-acid sequence, 348 residues long: Phospho-2-dehydro-3-deoxyheptonate aldolase, Trp-sensitive (348 aa).

The protein belongs to the class-I DAHP synthase family.

The catalysed reaction is D-erythrose 4-phosphate + phosphoenolpyruvate + H2O = 7-phospho-2-dehydro-3-deoxy-D-arabino-heptonate + phosphate. It participates in metabolic intermediate biosynthesis; chorismate biosynthesis; chorismate from D-erythrose 4-phosphate and phosphoenolpyruvate: step 1/7. Stereospecific condensation of phosphoenolpyruvate (PEP) and D-erythrose-4-phosphate (E4P) giving rise to 3-deoxy-D-arabino-heptulosonate-7-phosphate (DAHP). In Salmonella typhi, this protein is Phospho-2-dehydro-3-deoxyheptonate aldolase, Trp-sensitive (aroH).